The primary structure comprises 151 residues: MTVKGCLCLAFGVTLIVIVGVVVAMGVALSKGRAPGDDLVTLALNELAGDEDVVGRLSDAGAANLTGLLRGLILDHLSRNSSGLVAADALYERVLTRLRLDIFVFNGLVAAFNGFWLSFIIMYTCARTVRSGKKVAPAPIHSPPTMMSPYI.

2 helical membrane-spanning segments follow: residues 7 to 23 (LCLA…GVVV) and 107 to 123 (GLVA…IIMY).

It is found in the membrane. The sequence is that of Putative membrane protein ORF10 (ORF10) from Ictalurid herpesvirus 1 (strain Auburn) (IcHV-1).